The sequence spans 417 residues: NADH-quinone oxidoreductase subunit D (417 aa).

The protein belongs to the complex I 49 kDa subunit family. In terms of assembly, NDH-1 is composed of 14 different subunits. Subunits NuoB, C, D, E, F, and G constitute the peripheral sector of the complex.

The protein resides in the cell inner membrane. The catalysed reaction is a quinone + NADH + 5 H(+)(in) = a quinol + NAD(+) + 4 H(+)(out). NDH-1 shuttles electrons from NADH, via FMN and iron-sulfur (Fe-S) centers, to quinones in the respiratory chain. The immediate electron acceptor for the enzyme in this species is believed to be ubiquinone. Couples the redox reaction to proton translocation (for every two electrons transferred, four hydrogen ions are translocated across the cytoplasmic membrane), and thus conserves the redox energy in a proton gradient. This Coxiella burnetii (strain CbuG_Q212) (Coxiella burnetii (strain Q212)) protein is NADH-quinone oxidoreductase subunit D.